The primary structure comprises 227 residues: Ribonuclease HII (227 aa).

The 190-residue stretch at 16-205 (SLLAGVDEVG…VKMALDAVGV (190 aa)) folds into the RNase H type-2 domain. The a divalent metal cation site is built by D22, E23, and D114.

This sequence belongs to the RNase HII family. The cofactor is Mn(2+). Mg(2+) is required as a cofactor.

Its subcellular location is the cytoplasm. The enzyme catalyses Endonucleolytic cleavage to 5'-phosphomonoester.. Its function is as follows. Endonuclease that specifically degrades the RNA of RNA-DNA hybrids. The protein is Ribonuclease HII of Marinobacter nauticus (strain ATCC 700491 / DSM 11845 / VT8) (Marinobacter aquaeolei).